The following is a 129-amino-acid chain: Succinate dehydrogenase cytochrome b556 subunit (129 aa).

At 1-26 the chain is on the cytoplasmic side; sequence MIRNVKKQRPVNLDLQTIRFPITAIA. The helical transmembrane segment at 27-52 threads the bilayer; the sequence is SILHRVSGVITFIAVGILLWLLGTSL. The Periplasmic portion of the chain corresponds to 53 to 68; sequence SSPEGFQQAADIMDGF. The helical transmembrane segment at 69–89 threads the bilayer; it reads IVKFIMWGILTALAYHVIVGI. His-84 contributes to the heme binding site. The Cytoplasmic portion of the chain corresponds to 90–108; that stretch reads RHMLMDFGYLEETFEAGQR. The chain crosses the membrane as a helical span at residues 109–129; that stretch reads SAKISFVITVVLSLLAGVLVW.

It belongs to the cytochrome b560 family. In terms of assembly, part of an enzyme complex containing four subunits: a flavoprotein, an iron-sulfur protein, plus two membrane-anchoring proteins, SdhC and SdhD. The complex can form homotrimers. Heme is required as a cofactor.

The protein localises to the cell inner membrane. It participates in carbohydrate metabolism; tricarboxylic acid cycle. In terms of biological role, membrane-anchoring subunit of succinate dehydrogenase (SDH). This Salmonella typhi protein is Succinate dehydrogenase cytochrome b556 subunit (sdhC).